Here is a 151-residue protein sequence, read N- to C-terminus: Nucleoside diphosphate kinase (151 aa).

ATP contacts are provided by lysine 11, phenylalanine 59, arginine 87, threonine 93, arginine 104, and asparagine 114. Residue histidine 117 is the Pros-phosphohistidine intermediate of the active site.

Belongs to the NDK family. In terms of assembly, homotetramer. The cofactor is Mg(2+).

The protein resides in the cytoplasm. The catalysed reaction is a 2'-deoxyribonucleoside 5'-diphosphate + ATP = a 2'-deoxyribonucleoside 5'-triphosphate + ADP. It catalyses the reaction a ribonucleoside 5'-diphosphate + ATP = a ribonucleoside 5'-triphosphate + ADP. In terms of biological role, major role in the synthesis of nucleoside triphosphates other than ATP. The ATP gamma phosphate is transferred to the NDP beta phosphate via a ping-pong mechanism, using a phosphorylated active-site intermediate. This chain is Nucleoside diphosphate kinase, found in Prochlorococcus marinus (strain SARG / CCMP1375 / SS120).